The sequence spans 370 residues: Queuine tRNA-ribosyltransferase (370 aa).

Residue Asp-93 is the Proton acceptor of the active site. Substrate is bound by residues Asp-93–Phe-97, Asp-147, Gln-190, and Gly-217. An RNA binding region spans residues Gly-248 to Tyr-254. Residue Asp-267 is the Nucleophile of the active site. Residues Thr-272–Arg-276 form an RNA binding; important for wobble base 34 recognition region. Residues Cys-305, Cys-307, Cys-310, and His-336 each contribute to the Zn(2+) site.

Belongs to the queuine tRNA-ribosyltransferase family. Homodimer. Within each dimer, one monomer is responsible for RNA recognition and catalysis, while the other monomer binds to the replacement base PreQ1. Requires Zn(2+) as cofactor.

The catalysed reaction is 7-aminomethyl-7-carbaguanine + guanosine(34) in tRNA = 7-aminomethyl-7-carbaguanosine(34) in tRNA + guanine. It functions in the pathway tRNA modification; tRNA-queuosine biosynthesis. Its function is as follows. Catalyzes the base-exchange of a guanine (G) residue with the queuine precursor 7-aminomethyl-7-deazaguanine (PreQ1) at position 34 (anticodon wobble position) in tRNAs with GU(N) anticodons (tRNA-Asp, -Asn, -His and -Tyr). Catalysis occurs through a double-displacement mechanism. The nucleophile active site attacks the C1' of nucleotide 34 to detach the guanine base from the RNA, forming a covalent enzyme-RNA intermediate. The proton acceptor active site deprotonates the incoming PreQ1, allowing a nucleophilic attack on the C1' of the ribose to form the product. After dissociation, two additional enzymatic reactions on the tRNA convert PreQ1 to queuine (Q), resulting in the hypermodified nucleoside queuosine (7-(((4,5-cis-dihydroxy-2-cyclopenten-1-yl)amino)methyl)-7-deazaguanosine). This Natranaerobius thermophilus (strain ATCC BAA-1301 / DSM 18059 / JW/NM-WN-LF) protein is Queuine tRNA-ribosyltransferase.